The primary structure comprises 277 residues: Probable septum site-determining protein MinC (277 aa).

Residues 137 to 164 (ATTGNAPAEPAPAEPAAPAAAPQPPAVP) are disordered. The segment covering 145–164 (EPAPAEPAAPAAAPQPPAVP) has biased composition (pro residues).

The protein belongs to the MinC family. Interacts with MinD and FtsZ.

Cell division inhibitor that blocks the formation of polar Z ring septums. Rapidly oscillates between the poles of the cell to destabilize FtsZ filaments that have formed before they mature into polar Z rings. Prevents FtsZ polymerization. The chain is Probable septum site-determining protein MinC from Bordetella petrii (strain ATCC BAA-461 / DSM 12804 / CCUG 43448).